The sequence spans 448 residues: tRNA modification GTPase MnmE (448 aa).

Residues arginine 24, glutamate 81, and lysine 120 each contribute to the (6S)-5-formyl-5,6,7,8-tetrahydrofolate site. One can recognise a TrmE-type G domain in the interval 216–373; that stretch reads GLNVVLVGAP…LKRTLLREAG (158 aa). Asparagine 226 contributes to the K(+) binding site. GTP is bound by residues 226–231, 245–251, and 270–273; these read NVGKSS, TDIAGTT, and DTAG. Serine 230 is a Mg(2+) binding site. K(+)-binding residues include threonine 245, isoleucine 247, and threonine 250. Position 251 (threonine 251) interacts with Mg(2+). Lysine 448 provides a ligand contact to (6S)-5-formyl-5,6,7,8-tetrahydrofolate.

It belongs to the TRAFAC class TrmE-Era-EngA-EngB-Septin-like GTPase superfamily. TrmE GTPase family. In terms of assembly, homodimer. Heterotetramer of two MnmE and two MnmG subunits. The cofactor is K(+).

It localises to the cytoplasm. In terms of biological role, exhibits a very high intrinsic GTPase hydrolysis rate. Involved in the addition of a carboxymethylaminomethyl (cmnm) group at the wobble position (U34) of certain tRNAs, forming tRNA-cmnm(5)s(2)U34. This is tRNA modification GTPase MnmE from Neisseria meningitidis serogroup C (strain 053442).